Here is a 152-residue protein sequence, read N- to C-terminus: Lipoprotein signal peptidase (152 aa).

Transmembrane regions (helical) follow at residues 55 to 75 (NKMW…VFYM) and 85 to 105 (LGIS…DRVF). Catalysis depends on residues Asp111 and Asp129. The helical transmembrane segment at 124–144 (VFNIADSALCIGVVLIIIQTL) threads the bilayer.

The protein belongs to the peptidase A8 family.

It is found in the cell membrane. The enzyme catalyses Release of signal peptides from bacterial membrane prolipoproteins. Hydrolyzes -Xaa-Yaa-Zaa-|-(S,diacylglyceryl)Cys-, in which Xaa is hydrophobic (preferably Leu), and Yaa (Ala or Ser) and Zaa (Gly or Ala) have small, neutral side chains.. It functions in the pathway protein modification; lipoprotein biosynthesis (signal peptide cleavage). This protein specifically catalyzes the removal of signal peptides from prolipoproteins. This chain is Lipoprotein signal peptidase, found in Bacillus cereus (strain AH187).